The following is a 268-amino-acid chain: Ribosomal RNA small subunit methyltransferase A (268 aa).

S-adenosyl-L-methionine is bound by residues Asn-18, Leu-20, Gly-45, Glu-66, Asp-91, and Asn-112.

It belongs to the class I-like SAM-binding methyltransferase superfamily. rRNA adenine N(6)-methyltransferase family. RsmA subfamily.

The protein resides in the cytoplasm. It catalyses the reaction adenosine(1518)/adenosine(1519) in 16S rRNA + 4 S-adenosyl-L-methionine = N(6)-dimethyladenosine(1518)/N(6)-dimethyladenosine(1519) in 16S rRNA + 4 S-adenosyl-L-homocysteine + 4 H(+). In terms of biological role, specifically dimethylates two adjacent adenosines (A1518 and A1519) in the loop of a conserved hairpin near the 3'-end of 16S rRNA in the 30S particle. May play a critical role in biogenesis of 30S subunits. The polypeptide is Ribosomal RNA small subunit methyltransferase A (Shewanella putrefaciens (strain CN-32 / ATCC BAA-453)).